A 387-amino-acid polypeptide reads, in one-letter code: EARP and GARP complex-interacting protein 1 (387 aa).

Met-1 carries the N-acetylmethionine modification. WD repeat units lie at residues Thr-132–Val-172, Gly-180–Cys-222, Ala-226–Lys-266, and Glu-270–Phe-310. The disordered stretch occupies residues Phe-310–Pro-334. Position 320 is a phosphoserine (Ser-320). Over residues Gln-322–Pro-334 the composition is skewed to basic and acidic residues. The WD 5 repeat unit spans residues Glu-345–Ile-385.

Belongs to the WD repeat EIPR1 family. As to quaternary structure, interacts with two multisubunit tethering complexes: EARP composed of VPS50, VPS51, VPS52 and VPS53 subunits and GARP complex composed of VPS51, VPS52, VPS53 and VPS54 subunits. Interacts with SNAP29.

The protein localises to the golgi apparatus. Its subcellular location is the trans-Golgi network. Acts as a component of endosomal retrieval machinery that is involved in protein transport from early endosomes to either recycling endosomes or the trans-Golgi network. Mediates the recruitment of Golgi-associated retrograde protein (GARP) complex to the trans-Golgi network and controls early endosome-to-Golgi transport of internalized protein. Promotes the recycling of internalized transferrin receptor (TFRC) to the plasma membrane through interaction with endosome-associated recycling protein (EARP) complex. Controls proper insulin distribution and secretion, and retention of cargo in mature dense core vesicles. Required for the stability of the endosome-associated retrograde protein (EARP) complex subunits and for proper localization and association of EARP with membranes. The chain is EARP and GARP complex-interacting protein 1 from Macaca fascicularis (Crab-eating macaque).